A 127-amino-acid polypeptide reads, in one-letter code: Fluoride-specific ion channel FluC (127 aa).

4 helical membrane-spanning segments follow: residues 7-27 (LFLI…LTLL), 37-57 (FGTL…LAMF), 70-90 (FFVT…AEVI), and 102-122 (ITIT…GVFI). Residues glycine 77 and threonine 80 each contribute to the Na(+) site.

It belongs to the fluoride channel Fluc/FEX (TC 1.A.43) family.

Its subcellular location is the cell inner membrane. It catalyses the reaction fluoride(in) = fluoride(out). With respect to regulation, na(+) is not transported, but it plays an essential structural role and its presence is essential for fluoride channel function. Functionally, fluoride-specific ion channel. Important for reducing fluoride concentration in the cell, thus reducing its toxicity. This chain is Fluoride-specific ion channel FluC, found in Histophilus somni (strain 129Pt) (Haemophilus somnus).